We begin with the raw amino-acid sequence, 38 residues long: Photosystem II reaction center protein X (38 aa).

The helical transmembrane segment at 9–29 threads the bilayer; sequence ISSLTAGGLVVLTIAVALIVI.

This sequence belongs to the PsbX family. Type 1 subfamily. As to quaternary structure, PSII is composed of 1 copy each of membrane proteins PsbA, PsbB, PsbC, PsbD, PsbE, PsbF, PsbH, PsbI, PsbJ, PsbK, PsbL, PsbM, PsbT, PsbX, PsbY, PsbZ, Psb30/Ycf12, at least 3 peripheral proteins of the oxygen-evolving complex and a large number of cofactors. It forms dimeric complexes.

The protein localises to the plastid. It localises to the chloroplast thylakoid membrane. In terms of biological role, involved in the binding and/or turnover of quinones at the Q(B) site of photosystem II (PSII). PSII is a light-driven water plastoquinone oxidoreductase, using light energy to abstract electrons from H(2)O, generating a proton gradient subsequently used for ATP formation. This Trieres chinensis (Marine centric diatom) protein is Photosystem II reaction center protein X.